A 617-amino-acid chain; its full sequence is MAGALENARKEIKRISLEDHNENEYGQIYSVSGPVVVAENMVGCAMYELVKVGHHNLVGEVIRLDGDKATIQVYEETAGVTVGDPVLRTGKPLSVELGPGLMETIYDGIQRPLKAIKEQSQSIYIPRGVDAPALSREVKWAFKPGKLGVGDHISGGDIFGSIFENSLLEDHKILLPPRARGTITWIAPAGEYTVDETVLEVEFDGKKYSYSMFHTWPVRVPRPVTEKLSADYPLLTGQRVLDSLFPCVQGGTTCIPGAFGCGKTVISQSLSKYSNSDAIIYVGCGERGNEMAEVLMEFPELFTEVNGRKEPIMKRTTLVANTSNMPVAAREASIYTGITLAEYFRDQGKNVSMIADSSSRWAEALREISGRLGEMPADQGFPAYLGAKLASFYERAGKAVALGSPDRVGSVSIVAAVSPAGGDFSDPVTTSTLGITQVFWGLDKKLAQRKHFPSINTSVSYSKYTNVLNKYYDSNYPEFPVLRDRIKEILSNAEELEQVVQLVGKSALSDKDKIVLDVATLIKEDFLQQNGYSTYDAFCPIWKTYDMMKAFVSYFDEAQKSVSNGANWAVLSEATGDVKHAVSSSKFFEPSRGEREVHAEFEKLFASIQERFAESTD.

257 to 264 (GAFGCGKT) serves as a coordination point for ATP.

This sequence belongs to the ATPase alpha/beta chains family. As to quaternary structure, V-ATPase is a heteromultimeric enzyme composed of a peripheral catalytic V1 complex (components A to H) attached to an integral membrane V0 proton pore complex (components: a, c, c', c'', d, e, f and VOA1).

It is found in the vacuole membrane. The enzyme catalyses ATP + H2O + 4 H(+)(in) = ADP + phosphate + 5 H(+)(out). Catalytic subunit of the V1 complex of vacuolar(H+)-ATPase (V-ATPase), a multisubunit enzyme composed of a peripheral complex (V1) that hydrolyzes ATP and a membrane integral complex (V0) that translocates protons. V-ATPase is responsible for acidifying and maintaining the pH of intracellular compartments. In Eremothecium gossypii (strain ATCC 10895 / CBS 109.51 / FGSC 9923 / NRRL Y-1056) (Yeast), this protein is V-type proton ATPase catalytic subunit A (VMA1).